The following is a 151-amino-acid chain: MHDDIKLVSGEEIVKPTGEVHVVYFSSISNNTHRFIQKLSVKNSRIPYELEEEINVDSDYVLITPTYSGGGEFTSGAVPKQVIKFLNKENNRNYCRGVIASGNTNFGNTFAMAGPILSKKLNVPLLYQFELLGTQNDVEKINEILKEFWGK.

It belongs to the NrdI family.

In terms of biological role, probably involved in ribonucleotide reductase function. The chain is Protein NrdI from Mesoplasma florum (strain ATCC 33453 / NBRC 100688 / NCTC 11704 / L1) (Acholeplasma florum).